We begin with the raw amino-acid sequence, 366 residues long: Putative ankyrin repeat protein RBE_0601 (366 aa).

6 ANK repeats span residues 39 to 68, 94 to 124, 131 to 160, 162 to 186, 210 to 239, and 250 to 280; these read KHGT…DINE, LPDE…DVNT, HGGA…IASQ, VISA…TAHD, KSSN…NPNA, and IALS…DTSK.

This chain is Putative ankyrin repeat protein RBE_0601, found in Rickettsia bellii (strain RML369-C).